Reading from the N-terminus, the 249-residue chain is tRNA uridine(34) hydroxylase (249 aa).

Residues 124–218 (TKQDVIVIDT…YLEDTQNKNN (95 aa)) form the Rhodanese domain. The Cysteine persulfide intermediate role is filled by Cys-178.

Belongs to the TrhO family.

The enzyme catalyses uridine(34) in tRNA + AH2 + O2 = 5-hydroxyuridine(34) in tRNA + A + H2O. Catalyzes oxygen-dependent 5-hydroxyuridine (ho5U) modification at position 34 in tRNAs. The polypeptide is tRNA uridine(34) hydroxylase (Rickettsia canadensis (strain McKiel)).